The following is a 490-amino-acid chain: Homoserine O-acetyltransferase (490 aa).

The AB hydrolase-1 domain maps to 47–355 (NAILVCHALT…DYGHDAFLLE (309 aa)). The active-site Nucleophile is the S152. R222 is a binding site for substrate. Active-site residues include D316 and H349. D350 contacts substrate. 2 consecutive CBS domains span residues 376-436 (MKTD…LEDV) and 437-490 (MTKD…ISSY).

It belongs to the AB hydrolase superfamily. MetX family. In terms of assembly, homodimer.

Its subcellular location is the cytoplasm. The catalysed reaction is L-homoserine + acetyl-CoA = O-acetyl-L-homoserine + CoA. The protein operates within amino-acid biosynthesis; L-methionine biosynthesis via de novo pathway; O-acetyl-L-homoserine from L-homoserine: step 1/1. Functionally, transfers an acetyl group from acetyl-CoA to L-homoserine, forming acetyl-L-homoserine. This is Homoserine O-acetyltransferase from Methanobrevibacter ruminantium (strain ATCC 35063 / DSM 1093 / JCM 13430 / OCM 146 / M1) (Methanobacterium ruminantium).